We begin with the raw amino-acid sequence, 461 residues long: tRNA modification GTPase MnmE (461 aa).

Arginine 27, glutamate 89, and arginine 128 together coordinate (6S)-5-formyl-5,6,7,8-tetrahydrofolate. The TrmE-type G domain maps to 224–382 (GLKTAIVGRP…LEALIKKLFF (159 aa)). A K(+)-binding site is contributed by asparagine 234. GTP is bound by residues 234 to 239 (NVGKSS), 253 to 259 (TDVAGTT), and 278 to 281 (DTAG). Position 238 (serine 238) interacts with Mg(2+). K(+) contacts are provided by threonine 253, valine 255, and threonine 258. Threonine 259 contributes to the Mg(2+) binding site. Lysine 461 is a binding site for (6S)-5-formyl-5,6,7,8-tetrahydrofolate.

This sequence belongs to the TRAFAC class TrmE-Era-EngA-EngB-Septin-like GTPase superfamily. TrmE GTPase family. In terms of assembly, homodimer. Heterotetramer of two MnmE and two MnmG subunits. The cofactor is K(+).

It is found in the cytoplasm. Functionally, exhibits a very high intrinsic GTPase hydrolysis rate. Involved in the addition of a carboxymethylaminomethyl (cmnm) group at the wobble position (U34) of certain tRNAs, forming tRNA-cmnm(5)s(2)U34. The chain is tRNA modification GTPase MnmE from Lactobacillus delbrueckii subsp. bulgaricus (strain ATCC BAA-365 / Lb-18).